The sequence spans 345 residues: Holliday junction branch migration complex subunit RuvB (345 aa).

Positions 1–182 are large ATPase domain (RuvB-L); that stretch reads MQRLVEVESV…FGMHFRMQFY (182 aa). ATP-binding positions include Leu21, Arg22, Gly63, Lys66, Thr67, Thr68, 129 to 131, Arg172, Tyr182, and Arg219; that span reads EDY. Residue Thr67 participates in Mg(2+) binding. Positions 183-253 are small ATPAse domain (RuvB-S); sequence TEIELAKIIQ…RCKYALDELG (71 aa). The tract at residues 256-345 is head domain (RuvB-H); the sequence is ESGFDEMDIN…EDDLTQGKLF (90 aa). Positions 310 and 315 each coordinate DNA.

Belongs to the RuvB family. As to quaternary structure, homohexamer. Forms an RuvA(8)-RuvB(12)-Holliday junction (HJ) complex. HJ DNA is sandwiched between 2 RuvA tetramers; dsDNA enters through RuvA and exits via RuvB. An RuvB hexamer assembles on each DNA strand where it exits the tetramer. Each RuvB hexamer is contacted by two RuvA subunits (via domain III) on 2 adjacent RuvB subunits; this complex drives branch migration. In the full resolvosome a probable DNA-RuvA(4)-RuvB(12)-RuvC(2) complex forms which resolves the HJ.

Its subcellular location is the cytoplasm. The enzyme catalyses ATP + H2O = ADP + phosphate + H(+). The RuvA-RuvB-RuvC complex processes Holliday junction (HJ) DNA during genetic recombination and DNA repair, while the RuvA-RuvB complex plays an important role in the rescue of blocked DNA replication forks via replication fork reversal (RFR). RuvA specifically binds to HJ cruciform DNA, conferring on it an open structure. The RuvB hexamer acts as an ATP-dependent pump, pulling dsDNA into and through the RuvAB complex. RuvB forms 2 homohexamers on either side of HJ DNA bound by 1 or 2 RuvA tetramers; 4 subunits per hexamer contact DNA at a time. Coordinated motions by a converter formed by DNA-disengaged RuvB subunits stimulates ATP hydrolysis and nucleotide exchange. Immobilization of the converter enables RuvB to convert the ATP-contained energy into a lever motion, pulling 2 nucleotides of DNA out of the RuvA tetramer per ATP hydrolyzed, thus driving DNA branch migration. The RuvB motors rotate together with the DNA substrate, which together with the progressing nucleotide cycle form the mechanistic basis for DNA recombination by continuous HJ branch migration. Branch migration allows RuvC to scan DNA until it finds its consensus sequence, where it cleaves and resolves cruciform DNA. In Aliarcobacter butzleri (strain RM4018) (Arcobacter butzleri), this protein is Holliday junction branch migration complex subunit RuvB.